Here is a 249-residue protein sequence, read N- to C-terminus: Methylthioribulose-1-phosphate dehydratase (249 aa).

The Zn(2+) site is built by His103 and His105.

It belongs to the aldolase class II family. MtnB subfamily. The cofactor is Zn(2+).

The catalysed reaction is 5-(methylsulfanyl)-D-ribulose 1-phosphate = 5-methylsulfanyl-2,3-dioxopentyl phosphate + H2O. It functions in the pathway amino-acid biosynthesis; L-methionine biosynthesis via salvage pathway; L-methionine from S-methyl-5-thio-alpha-D-ribose 1-phosphate: step 2/6. Catalyzes the dehydration of methylthioribulose-1-phosphate (MTRu-1-P) into 2,3-diketo-5-methylthiopentyl-1-phosphate (DK-MTP-1-P). In Leptospira interrogans serogroup Icterohaemorrhagiae serovar copenhageni (strain Fiocruz L1-130), this protein is Methylthioribulose-1-phosphate dehydratase.